Consider the following 66-residue polypeptide: Beta-toxin Cb2 (66 aa).

In terms of domain architecture, LCN-type CS-alpha/beta spans 1-66; it reads KEGYLVDLHT…VWPLPNKRCK (66 aa). Disulfide bonds link cysteine 12-cysteine 65, cysteine 16-cysteine 41, cysteine 25-cysteine 46, and cysteine 29-cysteine 48.

Belongs to the long (4 C-C) scorpion toxin superfamily. Sodium channel inhibitor family. Beta subfamily. As to expression, expressed by the venom gland.

It is found in the secreted. Beta toxins bind voltage-independently at site-4 of sodium channels (Nav) and reduces peak current and shifts the voltage of activation toward more negative potentials thereby affecting sodium channel activation and promoting spontaneous and repetitive firing. Has an inhibitory effect on voltage-gated sodium channel hNav1.6/SCN8A, affecting both the activation and inactivation processes. Also reduces the peak current of hNav1.5/SCN5A but does not shift its voltage of activation. This toxin is active against mammals and lethal to mice. The protein is Beta-toxin Cb2 of Centruroides baergi (Scorpion).